We begin with the raw amino-acid sequence, 402 residues long: Multidrug resistance protein MdtH (402 aa).

Topologically, residues 1–12 are cytoplasmic; that stretch reads MSRVSQARNLGK. The helical transmembrane segment at 13 to 33 threads the bilayer; that stretch reads YFLLIDNMLVVLGFFVVFPLI. Over 34–98 the chain is Periplasmic; it reads SIRFVDQMGW…GFATMGIAHE (65 aa). A helical membrane pass occupies residues 99 to 116; it reads PWLLWFSCLLSGLGGTLF. Over 117-138 the chain is Cytoplasmic; it reads DPPRSALVVKLIRPQQRGRFFS. The chain crosses the membrane as a helical span at residues 139–159; sequence LLMMQDSAGAVIGALLGSWLL. At 160–164 the chain is on the periplasmic side; it reads QYDFR. Residues 165-185 form a helical membrane-spanning segment; the sequence is LVCATGAVLFVLCAAFNAWLL. Topologically, residues 186 to 213 are cytoplasmic; sequence PAWKLSTVRTPVREGMTRVMRDKRFVTY. The helical transmembrane segment at 214-234 threads the bilayer; it reads VLTLAGYYMLAVQVMLMLPIM. Over 235-243 the chain is Periplasmic; the sequence is VNDVAGAPS. A helical transmembrane segment spans residues 244–264; that stretch reads AVKWMYAIEACLSLTLLYPIA. The Cytoplasmic segment spans residues 265–276; that stretch reads RWSEKHFRLEHR. A helical transmembrane segment spans residues 277 to 297; it reads LMAGLLIMSLSMMPVGMVSGL. Topologically, residues 298–299 are periplasmic; it reads QQ. A helical membrane pass occupies residues 300-320; the sequence is LFTLICLFYIGSIIAEPARET. At 321–339 the chain is on the cytoplasmic side; that stretch reads LSASLADARARGSYMGFSR. A helical transmembrane segment spans residues 340 to 360; it reads LGLAIGGAIGYIGGGWLFDLG. The Periplasmic portion of the chain corresponds to 361-367; it reads KSAHQPE. Residues 368–388 traverse the membrane as a helical segment; sequence LPWMMLGIIGIFTFLALGWQF. The Cytoplasmic portion of the chain corresponds to 389–402; it reads SQKRTARRLLERDA.

This sequence belongs to the major facilitator superfamily. DHA1 family. MdtH (TC 2.A.1.2.21) subfamily.

The protein localises to the cell inner membrane. Confers resistance to norfloxacin and enoxacin. The polypeptide is Multidrug resistance protein MdtH (Escherichia coli O7:K1 (strain IAI39 / ExPEC)).